A 1737-amino-acid chain; its full sequence is Intraflagellar transport protein osm-1 (1737 aa).

WD repeat units lie at residues 14–53, 63–103, 110–150, 151–189, 191–229, 233–273, and 511–553; these read DGEA…KDRF, GKKS…NEKK, VQPS…SLYK, TDET…QSKI, TLQV…QQFD, QSEK…WDEG, and DQRS…EQVT. TPR repeat units lie at residues 700–737, 803–836, 848–881, 907–940, 979–1012, 1037–1070, and 1137–1170; these read NDTE…KTSY, SQLY…GKAI, VTLE…KKAV, TGYY…NDAI, HGRF…DDVL, RGDL…SDAY, and GTVH…ELAV.

It belongs to the IFT172 family. As to quaternary structure, component of the IFT complex B composed of at least che-2, che-13, dyf-1, dyf-3, dyf-6, dyf-11, dyf-13, ift-20, ift-74, ift-81, ifta-2, osm-1, osm-5 and osm-6. In terms of tissue distribution, expressed in amphid and phasmid chemosensory neurons, where it appears to concentrate at the base of the transition zones, which correspond to the basal bodies of motile and sensory cilia. Moves in the retrograde direction along cilia and dendrites, suggesting that it is retrieved from the distal endings of the cilia by a retrograde transport pathway that moves it along cilia and then dendrites, back to the neuronal cell body.

The protein localises to the cell projection. The protein resides in the cilium. Component of the intraflagellar transport (IFT) complex B required for transport of proteins in the motile cilium. May be required for ciliary entrance and transport of specific ciliary cargo proteins such as che-3 which are related to motility. Required for the maintenance and formation of chemosensory cilia that detect chemosensory cues. This is Intraflagellar transport protein osm-1 from Caenorhabditis elegans.